Here is a 347-residue protein sequence, read N- to C-terminus: 5-formaminoimidazole-4-carboxamide-1-(beta)-D-ribofuranosyl 5'-monophosphate synthetase (347 aa).

5-amino-1-(5-phospho-beta-D-ribosyl)imidazole-4-carboxamide contacts are provided by His23 and Ser91. Positions 112-323 (RKILLWESDQ…YSYLYWDEPM (212 aa)) constitute an ATP-grasp domain. Residues 142–196 (PDEV…VPAY) and Glu218 each bind ATP. Asn244 lines the 5-amino-1-(5-phospho-beta-D-ribosyl)imidazole-4-carboxamide pocket. Positions 283 and 296 each coordinate Mg(2+).

This sequence belongs to the phosphohexose mutase family. It depends on Mg(2+) as a cofactor. Mn(2+) serves as cofactor.

The enzyme catalyses 5-amino-1-(5-phospho-beta-D-ribosyl)imidazole-4-carboxamide + formate + ATP = 5-formamido-1-(5-phospho-D-ribosyl)imidazole-4-carboxamide + ADP + phosphate. Its pathway is purine metabolism; IMP biosynthesis via de novo pathway; 5-formamido-1-(5-phospho-D-ribosyl)imidazole-4-carboxamide from 5-amino-1-(5-phospho-D-ribosyl)imidazole-4-carboxamide (formate route): step 1/1. Functionally, catalyzes the ATP- and formate-dependent formylation of 5-aminoimidazole-4-carboxamide-1-beta-d-ribofuranosyl 5'-monophosphate (AICAR) to 5-formaminoimidazole-4-carboxamide-1-beta-d-ribofuranosyl 5'-monophosphate (FAICAR) in the absence of folates. This is 5-formaminoimidazole-4-carboxamide-1-(beta)-D-ribofuranosyl 5'-monophosphate synthetase from Ignicoccus hospitalis (strain KIN4/I / DSM 18386 / JCM 14125).